The sequence spans 639 residues: CD2-associated protein (639 aa).

Positions 1 to 59 (MVDYIVEYDYDAVHDDELTIRVGEIIRNVKKLQEEGWLEGELNGRRGMFPDNFVKEIKR) constitute an SH3 1; truncated domain. The segment at 1–175 (MVDYIVEYDY…EVTDDGETHE (175 aa)) is interaction with ANLN and localization to the midbody. A Glycyl lysine isopeptide (Lys-Gly) (interchain with G-Cter in SUMO2) cross-link involves residue lysine 58. Phosphoserine occurs at positions 67, 80, and 86. An SH3 2 domain is found at 108 to 167 (TKKRQCKVLFEYIPQNEDELELKVGDIIDINEEVEEGWWSGTLNNKLGLFPSNFVKELEV). Over residues 168–177 (TDDGETHEAQ) the composition is skewed to basic and acidic residues. A disordered region spans residues 168 to 209 (TDDGETHEAQDDSETVLAGPTSPIPSLGNVSETASGSVTQPK). Residues 195–207 (GNVSETASGSVTQ) are compositionally biased toward polar residues. Serine 224 is subject to Phosphoserine. Residues 227–256 (LRTRTSSSETEEKKPEKPLILQSLGPKTQS) form a disordered region. Residues 269–330 (KAKEYCRTLF…PDNFAVQINE (62 aa)) enclose the SH3 3 domain. Residues 333-428 (KDFPKPKKPP…PPPPIAKING (96 aa)) are disordered. 3 consecutive short sequence motifs (SH3-binding) follow at residues 336–352 (PKPK…APKP), 378–397 (KPSK…PPTK), and 410–422 (PKRP…PPPP). The span at 341–351 (PPPPAKAPAPK) shows a compositional bias: pro residues. Residues 356-379 (AAEKKYFSLKPEEKDEKSTLEQKP) show a composition bias toward basic and acidic residues. Over residues 385 to 395 (PQVPPKKPTPP) the composition is skewed to pro residues. Phosphoserine is present on residues serine 458, serine 463, serine 469, serine 510, and serine 514. Lysine 523 participates in a covalent cross-link: Glycyl lysine isopeptide (Lys-Gly) (interchain with G-Cter in SUMO2). Residue threonine 565 is modified to Phosphothreonine. Positions 577 to 638 (DVKKNSLDEL…IEKLKKAVLS (62 aa)) form a coiled coil. A Phosphoserine modification is found at serine 582.

In terms of assembly, homodimer. Interacts with F-actin, PKD2, NPHS1 and NPHS2. Interacts with WTIP. Interacts with DDN; interaction is direct. Interacts (via SH3 2 domain) with CBL (via phosphorylated C-terminus). Interacts with BCAR1/p130Cas (via SH3 domain). Interacts with MVB12A and ARHGAP17. Interacts with ANLN, CD2 and CBLB. Interacts with PDCD6IP and TSG101. Interacts with RIN3. Interacts directly with RET (inactive) and CBLC; upon RET activation by GDNF suggested to dissociate from RET as CBLC:CD2AP complex. Interacts with CGNL1 and SH3BP1; probably part of a complex at cell junctions. Interacts with CAPZA1. (Microbial infection) Interacts (via SH3 domains) with Chikungunya virus non-structural protein 3 (via C-terminus); this interaction plays a role in initiation of viral replication. In terms of processing, phosphorylated on tyrosine residues; probably by c-Abl, Fyn and c-Src. Widely expressed in fetal and adult tissues.

It is found in the cytoplasm. The protein localises to the cytoskeleton. It localises to the cell projection. The protein resides in the ruffle. Its subcellular location is the cell junction. Its function is as follows. Seems to act as an adapter protein between membrane proteins and the actin cytoskeleton. In collaboration with CBLC, modulates the rate of RET turnover and may act as regulatory checkpoint that limits the potency of GDNF on neuronal survival. Controls CBLC function, converting it from an inhibitor to a promoter of RET degradation. May play a role in receptor clustering and cytoskeletal polarity in the junction between T-cell and antigen-presenting cell. May anchor the podocyte slit diaphragm to the actin cytoskeleton in renal glomerolus. Also required for cytokinesis. Plays a role in epithelial cell junctions formation. In Homo sapiens (Human), this protein is CD2-associated protein (CD2AP).